The primary structure comprises 269 residues: GATA transcription factor 3 (269 aa).

A Nuclear localization signal motif is present at residues 136–143; the sequence is KPRTKRSR. Residues 176 to 230 form a GATA-type zinc finger; that stretch reads LVFQRRCSHCGTNNTPQWRTGPVGPKTLCNACGVRFKSGRLCPEYRPADSPTFSN. Residues 245–269 form a disordered region; that stretch reads KSKELGEETGEASTKSDPVKFGSKW.

This sequence belongs to the type IV zinc-finger family. Class A subfamily. Mostly expressed in roots. Also expressed in stems, flowers and leaves.

Its subcellular location is the nucleus. Functionally, transcriptional activator that specifically binds 5'-GATA-3' or 5'-GAT-3' motifs within gene promoters. May be involved in the regulation of some light-responsive genes. The chain is GATA transcription factor 3 (GATA3) from Arabidopsis thaliana (Mouse-ear cress).